The chain runs to 73 residues: Neurogranin (73 aa).

In terms of domain architecture, IQ spans 26 to 55; it reads ANAAAAKIQASFRGHMTRKKIKGGEIDRKT. Serine 36 carries the phosphoserine; by PKC modification. Basic and acidic residues predominate over residues 47–59; the sequence is KGGEIDRKTKDAE. The segment at 47–73 is disordered; the sequence is KGGEIDRKTKDAECANSTRGGDLRNGD.

Belongs to the neurogranin family.

Its function is as follows. Acts as a 'third messenger' substrate of protein kinase C-mediated molecular cascades during synaptic development and remodeling. Binds to calmodulin in the absence of calcium. In Serinus canaria (Island canary), this protein is Neurogranin (NRGN).